Consider the following 469-residue polypeptide: SVGFKAGVKEYKLTYYTPEYKTKDTDILAAFRVTPQPGVPPEEAGAAVAAESSTGTWTTVWTDGLTSLDRYKGRCYRIERVVGEKDQYIAYVAYPLDLFEEGSVTNMFTSIVGNVFGFKALRALRLEDLRIPPAYVKTFQGPPHGIQVERDKLNKYGRPLLGCTIKPKLGLSAKNYGRAVYECLRGGLDFTKDDENVNSQPFMRWRDRFLFCAEALFKAQAETGEIKGHYLNATAGTCEEMIKRAVFARELGVPIVMHDYLTGGFTANTTLAHYCRDNGLLLHIHRAMHAVIDRQKNHGIHFRVLAKALRMSGGDHIHSGTVVGKLEGERDITLGFVDLLRDDFVEQDRSRGIYFTQDWVSLPGVLPVASGGIHVWHMPALTEIFGDDSVLQFGGGTLGHPWGNAPGAVANRVALEACVKARNEGRDLAQEGNEVIREACKWSPELAAACEVWKEIVFNFAAVDILDNK.

An N6,N6,N6-trimethyllysine modification is found at lysine 5. The substrate site is built by asparagine 114 and threonine 164. Lysine 166 functions as the Proton acceptor in the catalytic mechanism. A substrate-binding site is contributed by lysine 168. Mg(2+) is bound by residues lysine 192, aspartate 194, and glutamate 195. Lysine 192 bears the N6-carboxylysine mark. The active-site Proton acceptor is histidine 285. Substrate contacts are provided by arginine 286, histidine 318, and serine 370.

Belongs to the RuBisCO large chain family. Type I subfamily. As to quaternary structure, heterohexadecamer of 8 large chains and 8 small chains; disulfide-linked. The disulfide link is formed within the large subunit homodimers. Requires Mg(2+) as cofactor. In terms of processing, the disulfide bond which can form in the large chain dimeric partners within the hexadecamer appears to be associated with oxidative stress and protein turnover.

The protein resides in the plastid. Its subcellular location is the chloroplast. It carries out the reaction 2 (2R)-3-phosphoglycerate + 2 H(+) = D-ribulose 1,5-bisphosphate + CO2 + H2O. The catalysed reaction is D-ribulose 1,5-bisphosphate + O2 = 2-phosphoglycolate + (2R)-3-phosphoglycerate + 2 H(+). In terms of biological role, ruBisCO catalyzes two reactions: the carboxylation of D-ribulose 1,5-bisphosphate, the primary event in carbon dioxide fixation, as well as the oxidative fragmentation of the pentose substrate in the photorespiration process. Both reactions occur simultaneously and in competition at the same active site. This chain is Ribulose bisphosphate carboxylase large chain, found in Nicandra physalodes (Apple-of-Peru).